A 674-amino-acid chain; its full sequence is UvrABC system protein B (674 aa).

The Helicase ATP-binding domain occupies 26-183; that stretch reads EGLEDGLAHQ…RRLAELQYTR (158 aa). Residue 39-46 coordinates ATP; it reads GVTGSGKT. The Beta-hairpin signature appears at 92–115; the sequence is YYDYYQPEAYVPSSDTFIEKDASV. One can recognise a Helicase C-terminal domain in the interval 431–597; sequence QVDDLLSEIR…GLNKKISDIL (167 aa). The UVR domain occupies 634 to 669; the sequence is QKRIHQLEAQMQQHAQNLEFEEAAQVRDQLHQVREL.

This sequence belongs to the UvrB family. As to quaternary structure, forms a heterotetramer with UvrA during the search for lesions. Interacts with UvrC in an incision complex.

The protein resides in the cytoplasm. The UvrABC repair system catalyzes the recognition and processing of DNA lesions. A damage recognition complex composed of 2 UvrA and 2 UvrB subunits scans DNA for abnormalities. Upon binding of the UvrA(2)B(2) complex to a putative damaged site, the DNA wraps around one UvrB monomer. DNA wrap is dependent on ATP binding by UvrB and probably causes local melting of the DNA helix, facilitating insertion of UvrB beta-hairpin between the DNA strands. Then UvrB probes one DNA strand for the presence of a lesion. If a lesion is found the UvrA subunits dissociate and the UvrB-DNA preincision complex is formed. This complex is subsequently bound by UvrC and the second UvrB is released. If no lesion is found, the DNA wraps around the other UvrB subunit that will check the other stand for damage. The chain is UvrABC system protein B from Erwinia tasmaniensis (strain DSM 17950 / CFBP 7177 / CIP 109463 / NCPPB 4357 / Et1/99).